Reading from the N-terminus, the 94-residue chain is PqqA binding protein (94 aa).

Belongs to the PqqD family. Monomer. Interacts with PqqE.

It participates in cofactor biosynthesis; pyrroloquinoline quinone biosynthesis. Its function is as follows. Functions as a PqqA binding protein and presents PqqA to PqqE, in the pyrroloquinoline quinone (PQQ) biosynthetic pathway. This chain is PqqA binding protein, found in Acinetobacter baumannii (strain SDF).